We begin with the raw amino-acid sequence, 278 residues long: Formamidopyrimidine-DNA glycosylase (278 aa).

Pro-2 (schiff-base intermediate with DNA) is an active-site residue. Glu-3 (proton donor) is an active-site residue. The active-site Proton donor; for beta-elimination activity is Lys-58. DNA contacts are provided by His-91, Arg-109, and Arg-158. Residues 243–277 (KVYDRKGLPCKVCKTPISQMVQGQRTTYFCSQCQK) form an FPG-type zinc finger. Residue Arg-267 is the Proton donor; for delta-elimination activity of the active site.

The protein belongs to the FPG family. In terms of assembly, monomer. Zn(2+) is required as a cofactor.

It carries out the reaction Hydrolysis of DNA containing ring-opened 7-methylguanine residues, releasing 2,6-diamino-4-hydroxy-5-(N-methyl)formamidopyrimidine.. The catalysed reaction is 2'-deoxyribonucleotide-(2'-deoxyribose 5'-phosphate)-2'-deoxyribonucleotide-DNA = a 3'-end 2'-deoxyribonucleotide-(2,3-dehydro-2,3-deoxyribose 5'-phosphate)-DNA + a 5'-end 5'-phospho-2'-deoxyribonucleoside-DNA + H(+). Functionally, involved in base excision repair of DNA damaged by oxidation or by mutagenic agents. Acts as a DNA glycosylase that recognizes and removes damaged bases. Has a preference for oxidized purines, such as 7,8-dihydro-8-oxoguanine (8-oxoG). Has AP (apurinic/apyrimidinic) lyase activity and introduces nicks in the DNA strand. Cleaves the DNA backbone by beta-delta elimination to generate a single-strand break at the site of the removed base with both 3'- and 5'-phosphates. The protein is Formamidopyrimidine-DNA glycosylase of Polynucleobacter necessarius subsp. necessarius (strain STIR1).